A 116-amino-acid polypeptide reads, in one-letter code: MNLITTIIAITITLSAVLATISFWLPQMTPDAEKLSPYECGFDPLGSARLPFSLRFFLIAILFLLFDLEIALLLPLPWGDQLTTPALTLAWSAAVLALLTLGLIYEWTQGGLEWAE.

3 helical membrane passes run 3–23 (LITT…TISF), 56–76 (FFLI…LLPL), and 85–105 (PALT…GLIY).

This sequence belongs to the complex I subunit 3 family.

It localises to the mitochondrion membrane. It catalyses the reaction a ubiquinone + NADH + 5 H(+)(in) = a ubiquinol + NAD(+) + 4 H(+)(out). Its function is as follows. Core subunit of the mitochondrial membrane respiratory chain NADH dehydrogenase (Complex I) that is believed to belong to the minimal assembly required for catalysis. Complex I functions in the transfer of electrons from NADH to the respiratory chain. The immediate electron acceptor for the enzyme is believed to be ubiquinone. This is NADH-ubiquinone oxidoreductase chain 3 (MT-ND3) from Salmo salar (Atlantic salmon).